The sequence spans 370 residues: Putative transposase InsL for insertion sequence element IS186A (370 aa).

This sequence belongs to the transposase 11 family.

Functionally, involved in the transposition of the insertion sequence IS186. This Escherichia coli (strain K12) protein is Putative transposase InsL for insertion sequence element IS186A (insL1).